The chain runs to 123 residues: Small ribosomal subunit protein uS12c (123 aa).

This sequence belongs to the universal ribosomal protein uS12 family. Part of the 30S ribosomal subunit.

The protein resides in the plastid. It is found in the chloroplast. With S4 and S5 plays an important role in translational accuracy. Located at the interface of the 30S and 50S subunits. This chain is Small ribosomal subunit protein uS12c (rps12), found in Chlorella vulgaris (Green alga).